The primary structure comprises 388 residues: S-adenosylmethionine synthase (388 aa).

Histidine 16 is an ATP binding site. Aspartate 18 serves as a coordination point for Mg(2+). Glutamate 44 is a K(+) binding site. Residues glutamate 57 and glutamine 100 each contribute to the L-methionine site. A flexible loop region spans residues 100–110 (QSADIAQGVNE). Residues 167–169 (DAK), 233–234 (RF), aspartate 242, 248–249 (RK), alanine 265, and lysine 269 contribute to the ATP site. L-methionine is bound at residue aspartate 242. Lysine 273 serves as a coordination point for L-methionine.

It belongs to the AdoMet synthase family. In terms of assembly, homotetramer; dimer of dimers. Requires Mg(2+) as cofactor. K(+) serves as cofactor.

The protein resides in the cytoplasm. The enzyme catalyses L-methionine + ATP + H2O = S-adenosyl-L-methionine + phosphate + diphosphate. It participates in amino-acid biosynthesis; S-adenosyl-L-methionine biosynthesis; S-adenosyl-L-methionine from L-methionine: step 1/1. In terms of biological role, catalyzes the formation of S-adenosylmethionine (AdoMet) from methionine and ATP. The overall synthetic reaction is composed of two sequential steps, AdoMet formation and the subsequent tripolyphosphate hydrolysis which occurs prior to release of AdoMet from the enzyme. The chain is S-adenosylmethionine synthase from Aromatoleum aromaticum (strain DSM 19018 / LMG 30748 / EbN1) (Azoarcus sp. (strain EbN1)).